The sequence spans 141 residues: Large ribosomal subunit protein uL16 (141 aa).

Positions 1–21 are enriched in basic residues; it reads MLMPKRTKFRKQMKGRNRGKS. Positions 1–22 are disordered; that stretch reads MLMPKRTKFRKQMKGRNRGKSF.

Belongs to the universal ribosomal protein uL16 family. In terms of assembly, part of the 50S ribosomal subunit.

Its function is as follows. Binds 23S rRNA and is also seen to make contacts with the A and possibly P site tRNAs. This is Large ribosomal subunit protein uL16 from Wolinella succinogenes (strain ATCC 29543 / DSM 1740 / CCUG 13145 / JCM 31913 / LMG 7466 / NCTC 11488 / FDC 602W) (Vibrio succinogenes).